Here is a 277-residue protein sequence, read N- to C-terminus: Bifunctional protein FolD (277 aa).

NADP(+)-binding positions include 164–166, Ser189, and Thr230; that span reads GRS.

This sequence belongs to the tetrahydrofolate dehydrogenase/cyclohydrolase family. Homodimer.

The catalysed reaction is (6R)-5,10-methylene-5,6,7,8-tetrahydrofolate + NADP(+) = (6R)-5,10-methenyltetrahydrofolate + NADPH. It catalyses the reaction (6R)-5,10-methenyltetrahydrofolate + H2O = (6R)-10-formyltetrahydrofolate + H(+). Its pathway is one-carbon metabolism; tetrahydrofolate interconversion. Its function is as follows. Catalyzes the oxidation of 5,10-methylenetetrahydrofolate to 5,10-methenyltetrahydrofolate and then the hydrolysis of 5,10-methenyltetrahydrofolate to 10-formyltetrahydrofolate. The polypeptide is Bifunctional protein FolD (Clostridium perfringens (strain 13 / Type A)).